The primary structure comprises 334 residues: Transmembrane protein 41 homolog (334 aa).

An N-linked (GlcNAc...) asparagine glycan is attached at Asn43. Residues 47-79 are disordered; sequence KNKNNNIDNKKNSNNNNNNNNNNNNKNSISNNN. Asn83 carries an N-linked (GlcNAc...) asparagine glycan. The next 6 helical transmembrane spans lie at 97–117, 156–176, 192–214, 246–266, 269–289, and 305–325; these read LPLW…VFLF, FIVI…SIPG, VGFP…ISYY, IVFL…ASPL, VPIH…TFLA, and IFDL…ILPT.

This sequence belongs to the TMEM41 family.

The protein resides in the membrane. The chain is Transmembrane protein 41 homolog from Dictyostelium discoideum (Social amoeba).